The chain runs to 162 residues: Protein-export protein SecB (162 aa).

The protein belongs to the SecB family. In terms of assembly, homotetramer, a dimer of dimers. One homotetramer interacts with 1 SecA dimer.

Its subcellular location is the cytoplasm. One of the proteins required for the normal export of preproteins out of the cell cytoplasm. It is a molecular chaperone that binds to a subset of precursor proteins, maintaining them in a translocation-competent state. It also specifically binds to its receptor SecA. The protein is Protein-export protein SecB of Legionella pneumophila (strain Paris).